Consider the following 146-residue polypeptide: Ribosome-binding factor A (146 aa).

The segment at 125 to 146 (RDLDADDDKTKDDRAKDDKDSE) is disordered.

The protein belongs to the RbfA family. In terms of assembly, monomer. Binds 30S ribosomal subunits, but not 50S ribosomal subunits or 70S ribosomes.

The protein resides in the cytoplasm. Functionally, one of several proteins that assist in the late maturation steps of the functional core of the 30S ribosomal subunit. Associates with free 30S ribosomal subunits (but not with 30S subunits that are part of 70S ribosomes or polysomes). Required for efficient processing of 16S rRNA. May interact with the 5'-terminal helix region of 16S rRNA. The sequence is that of Ribosome-binding factor A from Mesorhizobium japonicum (strain LMG 29417 / CECT 9101 / MAFF 303099) (Mesorhizobium loti (strain MAFF 303099)).